The following is a 345-amino-acid chain: Succinylglutamate desuccinylase (345 aa).

Positions 64, 67, and 161 each coordinate Zn(2+). Glu225 is a catalytic residue.

Belongs to the AspA/AstE family. Succinylglutamate desuccinylase subfamily. It depends on Zn(2+) as a cofactor.

The enzyme catalyses N-succinyl-L-glutamate + H2O = L-glutamate + succinate. It functions in the pathway amino-acid degradation; L-arginine degradation via AST pathway; L-glutamate and succinate from L-arginine: step 5/5. Transforms N(2)-succinylglutamate into succinate and glutamate. The polypeptide is Succinylglutamate desuccinylase (Shewanella piezotolerans (strain WP3 / JCM 13877)).